A 397-amino-acid chain; its full sequence is Argininosuccinate synthase (397 aa).

ATP is bound at residue 8–16; sequence AYSGGLDTS. 2 residues coordinate L-citrulline: Y86 and S91. An ATP-binding site is contributed by G116. T118, N122, and D123 together coordinate L-aspartate. Position 122 (N122) interacts with L-citrulline. L-citrulline contacts are provided by R126, S175, S184, E260, and Y272.

This sequence belongs to the argininosuccinate synthase family. Type 1 subfamily. Homotetramer.

It localises to the cytoplasm. It catalyses the reaction L-citrulline + L-aspartate + ATP = 2-(N(omega)-L-arginino)succinate + AMP + diphosphate + H(+). It participates in amino-acid biosynthesis; L-arginine biosynthesis; L-arginine from L-ornithine and carbamoyl phosphate: step 2/3. The sequence is that of Argininosuccinate synthase from Clostridium botulinum (strain 657 / Type Ba4).